Reading from the N-terminus, the 63-residue chain is Small ribosomal subunit protein bS21 (63 aa).

This sequence belongs to the bacterial ribosomal protein bS21 family.

The polypeptide is Small ribosomal subunit protein bS21 (Azobacteroides pseudotrichonymphae genomovar. CFP2).